We begin with the raw amino-acid sequence, 289 residues long: ATP synthase gamma chain (289 aa).

This sequence belongs to the ATPase gamma chain family. F-type ATPases have 2 components, CF(1) - the catalytic core - and CF(0) - the membrane proton channel. CF(1) has five subunits: alpha(3), beta(3), gamma(1), delta(1), epsilon(1). CF(0) has three main subunits: a, b and c.

The protein resides in the cell inner membrane. Its function is as follows. Produces ATP from ADP in the presence of a proton gradient across the membrane. The gamma chain is believed to be important in regulating ATPase activity and the flow of protons through the CF(0) complex. This Coxiella burnetii (strain CbuK_Q154) (Coxiella burnetii (strain Q154)) protein is ATP synthase gamma chain.